Consider the following 417-residue polypeptide: Pre-mRNA-splicing factor RBM22 (417 aa).

The C3H1-type zinc-finger motif lies at 159 to 186 (RNRPHICSFWVKGECKRGEECPYRHEKP). Positions 232-305 (TTLYVGGLGD…RRLNVKWGRS (74 aa)) constitute an RRM domain. 2 disordered regions span residues 303–348 (GRSQ…SANY) and 369–417 (GLSG…PSSG). Basic and acidic residues predominate over residues 309–318 (RGKEREHDGS). The span at 369–391 (GLSGPPPGFGPHMFPPMAPPPFL) shows a compositional bias: pro residues.

It belongs to the SLT11 family. Component of the pre-catalytic and catalytic spliceosome complexes. Component of the postcatalytic spliceosome P complex.

Its subcellular location is the nucleus. The protein localises to the cytoplasm. Required for pre-mRNA splicing as component of the activated spliceosome. Involved in the first step of pre-mRNA splicing. Binds directly to the internal stem-loop (ISL) domain of the U6 snRNA and to the pre-mRNA intron near the 5' splice site during the activation and catalytic phases of the spliceosome cycle. The polypeptide is Pre-mRNA-splicing factor RBM22 (rbm22) (Xenopus laevis (African clawed frog)).